Consider the following 120-residue polypeptide: Large ribosomal subunit protein bL17 (120 aa).

The protein belongs to the bacterial ribosomal protein bL17 family. In terms of assembly, part of the 50S ribosomal subunit. Contacts protein L32.

The protein is Large ribosomal subunit protein bL17 of Geobacillus kaustophilus (strain HTA426).